The primary structure comprises 84 residues: Translational regulator CsrA (84 aa).

It belongs to the CsrA/RsmA family. Homodimer; the beta-strands of each monomer intercalate to form a hydrophobic core, while the alpha-helices form wings that extend away from the core.

It is found in the cytoplasm. Its function is as follows. A translational regulator that binds mRNA to regulate translation initiation and/or mRNA stability. Usually binds in the 5'-UTR at or near the Shine-Dalgarno sequence preventing ribosome-binding, thus repressing translation. Its main target seems to be the major flagellin gene, while its function is anatagonized by FliW. In Leptospira interrogans serogroup Icterohaemorrhagiae serovar Lai (strain 56601), this protein is Translational regulator CsrA.